A 152-amino-acid chain; its full sequence is Small ribosomal subunit protein uS13 (152 aa).

It belongs to the universal ribosomal protein uS13 family. In terms of assembly, part of the 30S ribosomal subunit. Forms a loose heterodimer with protein S19. Forms two bridges to the 50S subunit in the 70S ribosome.

Its function is as follows. Located at the top of the head of the 30S subunit, it contacts several helices of the 16S rRNA. In the 70S ribosome it contacts the 23S rRNA (bridge B1a) and protein L5 of the 50S subunit (bridge B1b), connecting the 2 subunits; these bridges are implicated in subunit movement. This is Small ribosomal subunit protein uS13 from Pyrobaculum arsenaticum (strain DSM 13514 / JCM 11321 / PZ6).